A 152-amino-acid chain; its full sequence is Transcription elongation factor Spt5 (152 aa).

The region spanning 94–124 is the KOW domain; the sequence is PGDLVEVIAGPFKGQKAKVVKIDESKDEVVV.

Belongs to the archaeal Spt5 family. Heterodimer composed of Spt4 and Spt5. Interacts with RNA polymerase (RNAP) independently of nucleic acids. Forms a homodimer in solution.

Stimulates transcription elongation. This Pyrococcus furiosus (strain ATCC 43587 / DSM 3638 / JCM 8422 / Vc1) protein is Transcription elongation factor Spt5.